The following is a 141-amino-acid chain: ATP synthase epsilon chain (141 aa).

Belongs to the ATPase epsilon chain family. In terms of assembly, F-type ATPases have 2 components, CF(1) - the catalytic core - and CF(0) - the membrane proton channel. CF(1) has five subunits: alpha(3), beta(3), gamma(1), delta(1), epsilon(1). CF(0) has three main subunits: a, b and c.

Its subcellular location is the cell inner membrane. In terms of biological role, produces ATP from ADP in the presence of a proton gradient across the membrane. This chain is ATP synthase epsilon chain, found in Aromatoleum aromaticum (strain DSM 19018 / LMG 30748 / EbN1) (Azoarcus sp. (strain EbN1)).